A 338-amino-acid chain; its full sequence is 1-aminocyclopropane-1-carboxylate deaminase (338 aa).

Residue K51 is modified to N6-(pyridoxal phosphate)lysine. S78 serves as the catalytic Nucleophile.

The protein belongs to the ACC deaminase/D-cysteine desulfhydrase family. As to quaternary structure, homotrimer. The cofactor is pyridoxal 5'-phosphate.

The enzyme catalyses 1-aminocyclopropane-1-carboxylate + H2O = 2-oxobutanoate + NH4(+). Its function is as follows. Catalyzes a cyclopropane ring-opening reaction, the irreversible conversion of 1-aminocyclopropane-1-carboxylate (ACC) to ammonia and alpha-ketobutyrate. Allows growth on ACC as a nitrogen source. The chain is 1-aminocyclopropane-1-carboxylate deaminase from Burkholderia cenocepacia (strain HI2424).